The chain runs to 115 residues: Vespryn (115 aa).

The N-terminal stretch at 1-15 (MTWLLLCLLAQYENG) is a signal peptide. Residues 22 to 115 (SSSAKPYKTS…VKRKDHLRLT (94 aa)) enclose the B30.2/SPRY domain.

It belongs to the ohanin/vespryn family. Expressed by the venom gland.

It is found in the secreted. Functionally, neurotoxin that produces dose-dependent hypolocomotion and hyperalgesia in mice. May directly act on the central nervous system, as it is 6500-fold more potent when administered intracerebroventricularly than intraperitoneal. The chain is Vespryn from Pogona barbata (Bearded dragon).